A 120-amino-acid chain; its full sequence is MGLFSFPKEEKLRKQEDFLRVLREGRPYSLSKSFIIYIRKGAEKRRIGISVNKKVGKAVVRNRIKRLIREVYRLHRPYLREDIEMLVIVKPGENIKDLDFHKVKDMLIKIWEKAGALKEQ.

This sequence belongs to the RnpA family. As to quaternary structure, consists of a catalytic RNA component (M1 or rnpB) and a protein subunit.

It carries out the reaction Endonucleolytic cleavage of RNA, removing 5'-extranucleotides from tRNA precursor.. RNaseP catalyzes the removal of the 5'-leader sequence from pre-tRNA to produce the mature 5'-terminus. It can also cleave other RNA substrates such as 4.5S RNA. The protein component plays an auxiliary but essential role in vivo by binding to the 5'-leader sequence and broadening the substrate specificity of the ribozyme. The chain is Ribonuclease P protein component from Dictyoglomus thermophilum (strain ATCC 35947 / DSM 3960 / H-6-12).